Here is a 547-residue protein sequence, read N- to C-terminus: Chaperonin GroEL (547 aa).

Residues 30 to 33, lysine 51, 87 to 91, glycine 415, 479 to 481, and aspartate 495 contribute to the ATP site; these read TLGP, DGTTT, and NAA.

This sequence belongs to the chaperonin (HSP60) family. In terms of assembly, forms a cylinder of 14 subunits composed of two heptameric rings stacked back-to-back. Interacts with the co-chaperonin GroES.

It is found in the cytoplasm. The enzyme catalyses ATP + H2O + a folded polypeptide = ADP + phosphate + an unfolded polypeptide.. Together with its co-chaperonin GroES, plays an essential role in assisting protein folding. The GroEL-GroES system forms a nano-cage that allows encapsulation of the non-native substrate proteins and provides a physical environment optimized to promote and accelerate protein folding. This Bordetella bronchiseptica (strain ATCC BAA-588 / NCTC 13252 / RB50) (Alcaligenes bronchisepticus) protein is Chaperonin GroEL.